Here is a 200-residue protein sequence, read N- to C-terminus: CASP-like protein 1U2 (200 aa).

Topologically, residues 1–33 (MAEPVIVVPRKGVYSDDSYHHHHRHHSFHSCTN) are cytoplasmic. A helical transmembrane segment spans residues 34–54 (FLLRTLTAGATAAAVVVMLIS). Residues 55-77 (TQTSGTIYGYFRGRWRDYPAYKW) lie on the Extracellular side of the membrane. A helical membrane pass occupies residues 78-98 (LIIANAVVFVYSVMAAIVACF). The Cytoplasmic segment spans residues 99–120 (SVIARRGPLSYSPSAWLTLLVD). Residues 121 to 141 (FLAASALISAASAALAVALLA) traverse the membrane as a helical segment. Residues 142-168 (RNGQDLQGTHYWPTVCNYVSKFCDYTQ) lie on the Extracellular side of the membrane. The helical transmembrane segment at 169-189 (GAIIASFVGFGLLFLSTLLAA) threads the bilayer. At 190 to 200 (SALYHLSHRRH) the chain is on the cytoplasmic side.

It belongs to the Casparian strip membrane proteins (CASP) family. As to quaternary structure, homodimer and heterodimers.

The protein resides in the cell membrane. This chain is CASP-like protein 1U2, found in Physcomitrium patens (Spreading-leaved earth moss).